The following is a 212-amino-acid chain: Placenta-specific protein 1 (212 aa).

The first 22 residues, 1-22, serve as a signal peptide directing secretion; it reads MKVFKFIGLMILLTSAFSAGSG.

This sequence belongs to the PLAC1 family. In terms of tissue distribution, expressed in placenta. Localizes primarily to differentiated syncytiotrophoblast throughout gestation as well as to a small population of villous cytotrophoblasts. Also detected in maternal blood and rapidly disappears following delivery, but is not detected in other adult or fetal tissues examined.

The protein localises to the secreted. Functionally, may play a role in placental development. The chain is Placenta-specific protein 1 from Homo sapiens (Human).